Reading from the N-terminus, the 50-residue chain is Large ribosomal subunit protein bL33B (50 aa).

This sequence belongs to the bacterial ribosomal protein bL33 family.

In Mycoplasmopsis agalactiae (strain NCTC 10123 / CIP 59.7 / PG2) (Mycoplasma agalactiae), this protein is Large ribosomal subunit protein bL33B.